The following is a 309-amino-acid chain: ATP synthase gamma chain (309 aa).

It belongs to the ATPase gamma chain family. In terms of assembly, F-type ATPases have 2 components, CF(1) - the catalytic core - and CF(0) - the membrane proton channel. CF(1) has five subunits: alpha(3), beta(3), gamma(1), delta(1), epsilon(1). CF(0) has three main subunits: a, b and c.

It localises to the cell membrane. Functionally, produces ATP from ADP in the presence of a proton gradient across the membrane. The gamma chain is believed to be important in regulating ATPase activity and the flow of protons through the CF(0) complex. In Mycolicibacterium vanbaalenii (strain DSM 7251 / JCM 13017 / BCRC 16820 / KCTC 9966 / NRRL B-24157 / PYR-1) (Mycobacterium vanbaalenii), this protein is ATP synthase gamma chain.